Here is a 449-residue protein sequence, read N- to C-terminus: UDP-glycosyltransferase 74F2 (449 aa).

Residues S273, 325-327 (SPQ), 342-350 (HCGWNSTME), and 364-367 (WTDQ) contribute to the UDP-alpha-D-glucose site.

This sequence belongs to the UDP-glycosyltransferase family. In terms of tissue distribution, expressed in seedlings.

Glycosyltransferase that glucosylates benzoic acid and derivatives. Substrate preference is benzoic acid &gt; salicylic acid (SA) &gt; 3-hydroxybenzoic acid &gt; 4-hydroxybenzoic acid. Catalyzes the formation of both SA 2-O-beta-D-glucoside (SAG) and SA glucose ester (SGE). Has high affinity for the tryptophan precursor anthranilate. Catalyzes the formation of anthranilate glucose ester. Is the major source of this activity in the plant. The chain is UDP-glycosyltransferase 74F2 (UGT74F2) from Arabidopsis thaliana (Mouse-ear cress).